Here is a 661-residue protein sequence, read N- to C-terminus: 7-beta-hydroxy-3-oxochol-24-oyl-CoA 4-desaturase (661 aa).

Residue Q104 participates in FMN binding. 168–171 provides a ligand contact to substrate; the sequence is HCAH. The active-site Proton donor is the Y173. FMN-binding positions include R222, K298, and 320–321; that span reads GR. Positions 344, 347, 351, and 363 each coordinate [4Fe-4S] cluster. The FAD site is built by G394, E413, Q421, K431, and A458.

In the N-terminal section; belongs to the NADH:flavin oxidoreductase/NADH oxidase family. Homotrimer. The cofactor is FMN. FAD is required as a cofactor. It depends on [4Fe-4S] cluster as a cofactor.

It carries out the reaction 7beta-hydroxy-3-oxochol-24-oyl-CoA + NAD(+) = 7beta-hydroxy-3-oxochol-4-en-24-oyl-CoA + NADH + H(+). It functions in the pathway lipid metabolism; bile acid degradation. Activity is inhibited by sulfhydryl-reactive compounds, acriflavine, o-phenanthroline and EDTA. In terms of biological role, NADH-dependent flavin oxidoreductase. Stereo-specific NAD(H)-dependent 3-oxo-delta4-cholenoic acid oxidoreductase involved in bile acid 7beta-dehydroxylation. The protein is 7-beta-hydroxy-3-oxochol-24-oyl-CoA 4-desaturase of Clostridium scindens (strain JCM 10418 / VPI 12708).